A 709-amino-acid polypeptide reads, in one-letter code: Leucine-rich repeat-containing protein 4B (709 aa).

A signal peptide spans 1–38 (MAQAHIRGSPCPLLPPGRMSWPHGALLLLWLFSPPLRA). An LRRNT domain is found at 50–88 (GGGSPPATSCPAACSCSNQASRVICTRRELAEVPASIPV). 9 LRR repeats span residues 89 to 110 (NTRY…TFKH), 113 to 134 (HLEI…AFNG), 137 to 158 (SLNT…AFEY), 161 to 182 (KLRE…AFNR), 185 to 207 (SLRR…AFEG), 210 to 231 (NLRY…TALV), 232 to 253 (RLEE…SFQG), 256 to 277 (SLRK…AFDD), and 280 to 301 (SLEE…LFTP). Asn226 carries N-linked (GlcNAc...) asparagine glycosylation. Residues Asn285, Asn335, Asn376, Asn402, Asn424, Asn427, Asn446, and Asn454 are each glycosylated (N-linked (GlcNAc...) asparagine). The LRRCT domain occupies 313-365 (NPWHCNCDVLWLSWWLKETVPSNTTCCARCHAPAGLKGRYIGELDQSHFTCYA). Residues 366–454 (PVIVEPPTDL…GNTTASATLN (89 aa)) form the Ig-like C2-type domain. A disulfide bridge connects residues Cys387 and Cys438. The segment at 496–552 (TQPGEEAQQPRGTEKEPPGPTTDGAWGGGRPDAAAPASASTTAPAPRSSRPTEKAFT) is disordered. Over residues 528–544 (AAAPASASTTAPAPRSS) the composition is skewed to low complexity. The helical transmembrane segment at 575–595 (IIIGCFVAITFMAAVMLVAFY) threads the bilayer. A Phosphoserine modification is found at Ser689.

Interacts with PTPRF. Interacts with DLG4. Post-translationally, N-glycosylated. O-glycosylated; contains sialic acid.

The protein resides in the membrane. It is found in the presynaptic cell membrane. Its function is as follows. Synaptic adhesion protein. Regulates the formation of excitatory synapses. The trans-synaptic adhesion between LRRC4B and PTPRF regulates the formation of excitatory synapses in a bidirectional manner. The sequence is that of Leucine-rich repeat-containing protein 4B (Lrrc4b) from Mus musculus (Mouse).